We begin with the raw amino-acid sequence, 535 residues long: Solute carrier family 22 member 7 (535 aa).

Transmembrane regions (helical) follow at residues 21 to 41, 144 to 164, 178 to 198, 202 to 222, 232 to 252, 257 to 277, 344 to 364, 375 to 395, 402 to 422, 429 to 449, 464 to 484, and 489 to 509; these read LVLMALPRMLLPMHFLLPVFM, ITSTCFFIGVLVGAVVYGYLS, VSSLVLGLMSAASINYIMFVV, LTGSALAGFTIIVLPLELEWL, VISTVFWSGGVLLLALVGYLI, WLLLAATLPCVPGIISIWWVP, ISLCCMMVWFGVNFSYYGLTL, QTQLLFGAVELPSKIMVYFLV, LTEAGMLLGAALTFGTSLLVS, ITALVVVGKAFSEAAFTTAYL, LGLTALMGRLGASLAPLAALL, and LLLPKVAYGGIALVAACTALL.

Belongs to the major facilitator (TC 2.A.1) superfamily. Organic cation transporter (TC 2.A.1.19) family. As to expression, expressed in liver and kidney. Expressed at low levels in adipose tissue. Expressed in fetal liver. In kidney, expressed at the brush border of the proximal tubule S3 segment (S3) in the outer stripe and medullary rays. In kidney, expression is higher in female than male.

It localises to the basolateral cell membrane. Its subcellular location is the apical cell membrane. The protein localises to the cell membrane. The catalysed reaction is orotate(out) + L-glutamate(in) = orotate(in) + L-glutamate(out). The enzyme catalyses 3',5'-cyclic GMP(in) = 3',5'-cyclic GMP(out). It carries out the reaction GMP(in) = GMP(out). It catalyses the reaction 2'-deoxyguanosine(in) = 2'-deoxyguanosine(out). The catalysed reaction is GDP(in) = GDP(out). The enzyme catalyses guanosine(in) = guanosine(out). It carries out the reaction GTP(in) = GTP(out). It catalyses the reaction 3',5'-cyclic AMP(in) = 3',5'-cyclic AMP(out). The catalysed reaction is creatinine(in) = creatinine(out). The enzyme catalyses prostaglandin E2(out) = prostaglandin E2(in). It carries out the reaction 2-oxoglutarate(in) = 2-oxoglutarate(out). It catalyses the reaction glutarate(in) = glutarate(out). The catalysed reaction is urate(out) = urate(in). The enzyme catalyses estrone 3-sulfate(out) = estrone 3-sulfate(in). Functionally, functions as a Na(+)-independent bidirectional multispecific transporter. Contributes to the renal and hepatic elimination of endogenous organic compounds from the systemic circulation into the urine and bile, respectively. Capable of transporting a wide range of purine and pyrimidine nucleobases, nucleosides, and nucleotides with cGMP, 2'deoxyguanosine and GMP being the preferred substrates. Functions as a pH- and chloride-independent cGMP bidirectional facilitative transporter that can regulate both intracellular and extracellular levels of cGMP and may be involved in cGMP signaling pathways. Mediates orotate/glutamate bidirectional exchange and most likely display a physiological role in hepatic release of glutamate into the blood. Involved in renal secretion and possible reabsorption of creatinine. Able to uptake prostaglandin E2 (PGE2) and may contribute to PGE2 renal excretion. Also transports alpha-ketoglutarate and urate. Apart from the orotate/glutamate exchange, the counterions for the uptake of other SLC22A7/OAT2 substrates remain to be identified. The polypeptide is Solute carrier family 22 member 7 (Rattus norvegicus (Rat)).